A 153-amino-acid chain; its full sequence is MIALIQRVAQARVTVAGRTTGEIGAGLLALVCAERGDTEAQAERLLAKMLSYRVFSDADGKMNLPVQNMDGNGNPGGLLVVSQFTLAADTNSGTRPSFTPAASPEDGRRLYEHFVAQARAAHPQVQTGEFGAMMQVSLVNDGPVTFWLRVPPA.

Residues G142 to P143 carry the Gly-cisPro motif, important for rejection of L-amino acids motif.

The protein belongs to the DTD family. In terms of assembly, homodimer.

It is found in the cytoplasm. It catalyses the reaction glycyl-tRNA(Ala) + H2O = tRNA(Ala) + glycine + H(+). It carries out the reaction a D-aminoacyl-tRNA + H2O = a tRNA + a D-alpha-amino acid + H(+). Functionally, an aminoacyl-tRNA editing enzyme that deacylates mischarged D-aminoacyl-tRNAs. Also deacylates mischarged glycyl-tRNA(Ala), protecting cells against glycine mischarging by AlaRS. Acts via tRNA-based rather than protein-based catalysis; rejects L-amino acids rather than detecting D-amino acids in the active site. By recycling D-aminoacyl-tRNA to D-amino acids and free tRNA molecules, this enzyme counteracts the toxicity associated with the formation of D-aminoacyl-tRNA entities in vivo and helps enforce protein L-homochirality. In Cupriavidus taiwanensis (strain DSM 17343 / BCRC 17206 / CCUG 44338 / CIP 107171 / LMG 19424 / R1) (Ralstonia taiwanensis (strain LMG 19424)), this protein is D-aminoacyl-tRNA deacylase.